The primary structure comprises 159 residues: Small ribosomal subunit protein uS9 (159 aa).

Belongs to the universal ribosomal protein uS9 family.

This Beijerinckia indica subsp. indica (strain ATCC 9039 / DSM 1715 / NCIMB 8712) protein is Small ribosomal subunit protein uS9.